The following is a 33-amino-acid chain: Brevinin-2JD (33 aa).

A disulfide bridge connects residues Cys-27 and Cys-33.

As to expression, expressed by the skin glands.

It is found in the secreted. In terms of biological role, has antibacterial activity against E.coli ATCC 25992 (MIC=38 uM), E.coli CIB 84492 (MIC=38 uM), S.aureus ATCC 25923 (MIC=19 uM) and S.aureus CIB 85462 (MIC=19 uM). Has antifungal activity against C.albicans (MIC=19 uM). Has weak hemolytic activity against rabbit erythrocytes. In Odorrana jingdongensis (Jingdong frog), this protein is Brevinin-2JD.